Reading from the N-terminus, the 282-residue chain is HTH-type transcriptional activator RhaR (282 aa).

Residues 179 to 277 (DKLITALAGS…GMTPVQWRHR (99 aa)) enclose the HTH araC/xylS-type domain. DNA-binding regions (H-T-H motif) lie at residues 196–217 (EKFCEQEQCSERALRQQFRTQT) and 244–267 (VSEVAMRCGFEDSNYFSVVFNREV).

As to quaternary structure, binds DNA as a dimer.

Its subcellular location is the cytoplasm. Functionally, activates expression of the rhaSR operon in response to L-rhamnose. The polypeptide is HTH-type transcriptional activator RhaR (Enterobacter sp. (strain 638)).